We begin with the raw amino-acid sequence, 132 residues long: Chemokine-like protein TAFA-5 (132 aa).

The signal sequence occupies residues methionine 1–glycine 43. A glycan (N-linked (GlcNAc...) asparagine) is linked at asparagine 113.

Belongs to the TAFA family. In terms of tissue distribution, expressed in the subcutaneous and perirenal adipose tissue (at protein level). Highly expressed in adipose tissue with moderate expression in the brain and ovary. Isoform 2: Brain-specific.

It is found in the secreted. Functionally, acts as a chemokine-like protein by regulating cell proliferation and migration through activation of G protein-coupled receptors (GPCRs), such as S1PR2 and FPR2. Stimulates chemotactic migration of macrophages mediated by the MAPK3/ERK1 and AKT1 pathway. Blocks TNFSF11/RANKL-induced osteoclast formation from macrophages by inhibiting up-regulation of osteoclast fusogenic and differentiation genes. Stimulation of macrophage migration and inhibition of osteoclast formation is mediated via GPCR FPR2. Acts as an adipokine by negatively regulating vascular smooth muscle cell (VSMC) proliferation and migration in response to platelet-derived growth factor stimulation via GPCR S1PR2 and G protein GNA12/GNA13-transmitted RHOA signaling. Inhibits injury-induced cell proliferation and neointima formation in the femoral arteries. This chain is Chemokine-like protein TAFA-5, found in Homo sapiens (Human).